A 564-amino-acid polypeptide reads, in one-letter code: Eukaryotic translation initiation factor 3 subunit L (564 aa).

Ser-2 is modified (N-acetylserine). Position 21 is a phosphoserine (Ser-21). The region spanning 331-537 is the PCI domain; the sequence is DAIRVFANIL…IHIADTKVAR (207 aa). 2 positions are modified to N6-acetyllysine: Lys-465 and Lys-549.

Component of the eukaryotic translation initiation factor 3 (eIF-3) complex, which is composed of 13 subunits: EIF3A, EIF3B, EIF3C, EIF3D, EIF3E, EIF3F, EIF3G, EIF3H, EIF3I, EIF3J, EIF3K, EIF3L and EIF3M. The eIF-3 complex appears to include 3 stable modules: module A is composed of EIF3A, EIF3B, EIF3G and EIF3I; module B is composed of EIF3F, EIF3H, and EIF3M; and module C is composed of EIF3C, EIF3D, EIF3E, EIF3K and EIF3L. EIF3C of module C binds EIF3B of module A and EIF3H of module B, thereby linking the three modules. EIF3J is a labile subunit that binds to the eIF-3 complex via EIF3B. The eIF-3 complex interacts with RPS6KB1 under conditions of nutrient depletion. Mitogenic stimulation leads to binding and activation of a complex composed of MTOR and RPTOR, leading to phosphorylation and release of RPS6KB1 and binding of EIF4B to eIF-3. Interacts with RRN3.

It localises to the cytoplasm. Functionally, component of the eukaryotic translation initiation factor 3 (eIF-3) complex, which is required for several steps in the initiation of protein synthesis. The eIF-3 complex associates with the 40S ribosome and facilitates the recruitment of eIF-1, eIF-1A, eIF-2:GTP:methionyl-tRNAi and eIF-5 to form the 43S pre-initiation complex (43S PIC). The eIF-3 complex stimulates mRNA recruitment to the 43S PIC and scanning of the mRNA for AUG recognition. The eIF-3 complex is also required for disassembly and recycling of post-termination ribosomal complexes and subsequently prevents premature joining of the 40S and 60S ribosomal subunits prior to initiation. The eIF-3 complex specifically targets and initiates translation of a subset of mRNAs involved in cell proliferation, including cell cycling, differentiation and apoptosis, and uses different modes of RNA stem-loop binding to exert either translational activation or repression. In terms of biological role, (Microbial infection) In case of FCV infection, plays a role in the ribosomal termination-reinitiation event leading to the translation of VP2. The protein is Eukaryotic translation initiation factor 3 subunit L of Homo sapiens (Human).